The following is a 343-amino-acid chain: Arginine-hydroxylase NDUFAF5, mitochondrial (343 aa).

The N-terminal 29 residues, 1–29, are a transit peptide targeting the mitochondrion; sequence MLRRVVLSRLYARLGGPAVSAGRGGRRGV. Residues 18–40 form a disordered region; sequence AVSAGRGGRRGVASSVPPSGSTS.

The protein belongs to the methyltransferase superfamily. As to quaternary structure, interacts with NDUFAF8, leading to stabilize NDUFAF5. Interacts with NDUFS7. Interacts with PYURF (via TRM112 domain); the interaction is direct and stabilizes NDUFAF5 protein.

It localises to the mitochondrion inner membrane. Its function is as follows. Arginine hydroxylase that mediates hydroxylation of 'Arg-111' of NDUFS7 and is involved in the assembly of mitochondrial NADH:ubiquinone oxidoreductase complex (complex I, MT-ND1) at early stages. May also have methyltransferase activity. This Rattus norvegicus (Rat) protein is Arginine-hydroxylase NDUFAF5, mitochondrial.